Consider the following 332-residue polypeptide: Transcription regulatory protein SNF6 (332 aa).

Positions 2–8 (GVIKKKR) match the Nuclear localization signal motif. Position 165 is a phosphothreonine (threonine 165). A disordered region spans residues 278–299 (VTTVASQSPHATATEKEPVPAV).

In terms of assembly, component of the SWI/SNF global transcription activator complex. The 1.14 MDa SWI/SNF complex is composed of 11 different subunits: one copy each of SWI1, SNF2/SWI2, SNF5, SNF12/SWP73, ARP7/SWP61, ARP9/SWP59; two copies each of SWI3, SNF6, SNF11, SWP82; and three copies of TAF14/SWP29.

The protein resides in the nucleus. In terms of biological role, involved in transcriptional activation. Component of the SWI/SNF complex, an ATP-dependent chromatin remodeling complex, which is required for the positive and negative regulation of gene expression of a large number of genes. It changes chromatin structure by altering DNA-histone contacts within a nucleosome, leading eventually to a change in nucleosome position, thus facilitating or repressing binding of gene-specific transcription factors. This is Transcription regulatory protein SNF6 (SNF6) from Saccharomyces cerevisiae (strain ATCC 204508 / S288c) (Baker's yeast).